The primary structure comprises 488 residues: Glutamyl-tRNA(Gln) amidotransferase subunit A (488 aa).

Active-site charge relay system residues include lysine 77 and serine 152. Serine 176 serves as the catalytic Acyl-ester intermediate.

Belongs to the amidase family. GatA subfamily. As to quaternary structure, heterotrimer of A, B and C subunits.

The catalysed reaction is L-glutamyl-tRNA(Gln) + L-glutamine + ATP + H2O = L-glutaminyl-tRNA(Gln) + L-glutamate + ADP + phosphate + H(+). In terms of biological role, allows the formation of correctly charged Gln-tRNA(Gln) through the transamidation of misacylated Glu-tRNA(Gln) in organisms which lack glutaminyl-tRNA synthetase. The reaction takes place in the presence of glutamine and ATP through an activated gamma-phospho-Glu-tRNA(Gln). The protein is Glutamyl-tRNA(Gln) amidotransferase subunit A of Streptococcus pyogenes serotype M2 (strain MGAS10270).